Reading from the N-terminus, the 297-residue chain is Aspartate carbamoyltransferase catalytic subunit (297 aa).

2 residues coordinate carbamoyl phosphate: R48 and T49. K76 lines the L-aspartate pocket. Residues R98, H129, and Q132 each contribute to the carbamoyl phosphate site. Positions 162 and 214 each coordinate L-aspartate. Carbamoyl phosphate-binding residues include A257 and P258.

Belongs to the aspartate/ornithine carbamoyltransferase superfamily. ATCase family. In terms of assembly, heterododecamer (2C3:3R2) of six catalytic PyrB chains organized as two trimers (C3), and six regulatory PyrI chains organized as three dimers (R2).

The enzyme catalyses carbamoyl phosphate + L-aspartate = N-carbamoyl-L-aspartate + phosphate + H(+). It participates in pyrimidine metabolism; UMP biosynthesis via de novo pathway; (S)-dihydroorotate from bicarbonate: step 2/3. Catalyzes the condensation of carbamoyl phosphate and aspartate to form carbamoyl aspartate and inorganic phosphate, the committed step in the de novo pyrimidine nucleotide biosynthesis pathway. In Leuconostoc mesenteroides subsp. mesenteroides (strain ATCC 8293 / DSM 20343 / BCRC 11652 / CCM 1803 / JCM 6124 / NCDO 523 / NBRC 100496 / NCIMB 8023 / NCTC 12954 / NRRL B-1118 / 37Y), this protein is Aspartate carbamoyltransferase catalytic subunit.